The primary structure comprises 131 residues: Large ribosomal subunit protein bL17 (131 aa).

Belongs to the bacterial ribosomal protein bL17 family. In terms of assembly, part of the 50S ribosomal subunit. Contacts protein L32.

This is Large ribosomal subunit protein bL17 from Methylacidiphilum infernorum (isolate V4) (Methylokorus infernorum (strain V4)).